Here is a 376-residue protein sequence, read N- to C-terminus: Chaperone protein DnaJ (376 aa).

Positions 5-70 (DYYEVLGVAK…QKRAAYDQYG (66 aa)) constitute a J domain. Residues 136–214 (GYDTQIRVPS…CHGSGKVKET (79 aa)) form a CR-type zinc finger. Residues Cys149, Cys152, Cys166, Cys169, Cys188, Cys191, Cys202, and Cys205 each coordinate Zn(2+). CXXCXGXG motif repeat units follow at residues 149 to 156 (CGICHGSG), 166 to 173 (CPTCHGQG), 188 to 195 (CPKCHGTG), and 202 to 209 (CVHCHGSG).

It belongs to the DnaJ family. In terms of assembly, homodimer. The cofactor is Zn(2+).

Its subcellular location is the cytoplasm. In terms of biological role, participates actively in the response to hyperosmotic and heat shock by preventing the aggregation of stress-denatured proteins and by disaggregating proteins, also in an autonomous, DnaK-independent fashion. Unfolded proteins bind initially to DnaJ; upon interaction with the DnaJ-bound protein, DnaK hydrolyzes its bound ATP, resulting in the formation of a stable complex. GrpE releases ADP from DnaK; ATP binding to DnaK triggers the release of the substrate protein, thus completing the reaction cycle. Several rounds of ATP-dependent interactions between DnaJ, DnaK and GrpE are required for fully efficient folding. Also involved, together with DnaK and GrpE, in the DNA replication of plasmids through activation of initiation proteins. This is Chaperone protein DnaJ from Burkholderia thailandensis (strain ATCC 700388 / DSM 13276 / CCUG 48851 / CIP 106301 / E264).